A 212-amino-acid polypeptide reads, in one-letter code: Thymidylate kinase (212 aa).

ATP is bound at residue 7–14; it reads GGEGCGKT.

It belongs to the thymidylate kinase family.

The catalysed reaction is dTMP + ATP = dTDP + ADP. Its function is as follows. Phosphorylation of dTMP to form dTDP in both de novo and salvage pathways of dTTP synthesis. In Gloeobacter violaceus (strain ATCC 29082 / PCC 7421), this protein is Thymidylate kinase.